A 555-amino-acid polypeptide reads, in one-letter code: Glutamine--tRNA ligase (555 aa).

The 'HIGH' region motif lies at 34-44; the sequence is PEPNGYLHIGH. ATP contacts are provided by residues 35-37 and 41-47; these read EPN and HIGHAKS. 2 residues coordinate L-glutamine: Asp67 and Tyr212. Residues Thr231, 261-262, and 269-271 contribute to the ATP site; these read RL and MSK. The 'KMSKS' region signature appears at 268–272; it reads VMSKR. The tract at residues 317–324 is interaction with tRNA; it reads TKQDNTIE.

Belongs to the class-I aminoacyl-tRNA synthetase family. Monomer.

Its subcellular location is the cytoplasm. It carries out the reaction tRNA(Gln) + L-glutamine + ATP = L-glutaminyl-tRNA(Gln) + AMP + diphosphate. This chain is Glutamine--tRNA ligase, found in Salmonella paratyphi B (strain ATCC BAA-1250 / SPB7).